The chain runs to 203 residues: ATP phosphoribosyltransferase (203 aa).

It belongs to the ATP phosphoribosyltransferase family. Short subfamily.

The protein resides in the cytoplasm. It catalyses the reaction 1-(5-phospho-beta-D-ribosyl)-ATP + diphosphate = 5-phospho-alpha-D-ribose 1-diphosphate + ATP. It functions in the pathway amino-acid biosynthesis; L-histidine biosynthesis; L-histidine from 5-phospho-alpha-D-ribose 1-diphosphate: step 1/9. In terms of biological role, catalyzes the condensation of ATP and 5-phosphoribose 1-diphosphate to form N'-(5'-phosphoribosyl)-ATP (PR-ATP). Has a crucial role in the pathway because the rate of histidine biosynthesis seems to be controlled primarily by regulation of HisG enzymatic activity. The polypeptide is ATP phosphoribosyltransferase (Thermococcus kodakarensis (strain ATCC BAA-918 / JCM 12380 / KOD1) (Pyrococcus kodakaraensis (strain KOD1))).